A 209-amino-acid polypeptide reads, in one-letter code: Homeobox protein ceh-2 (209 aa).

Positions 1–14 (MTLKFSVERLVDSE) are enriched in basic and acidic residues. Disordered stretches follow at residues 1–46 (MTLK…KSGK) and 181–209 (HKRVRLEGSDPNAPMSNDEDDEDDKKSVS). Residues 15–24 (KESEEADVEE) show a composition bias toward acidic residues. Positions 126-185 (NKRIRTAFSASQLIQLEKAFEGNHYVVGNERKQLAAKLSLTETQVKVWFQNRRTKHKRVR) form a DNA-binding region, homeobox.

Belongs to the EMX homeobox family. As to expression, in the anterior pharynx, expressed in the I3 interneuron, the NSM and M3 motor neuron pairs, the three m2 muscle cells and the three e2 epithelial cells (at protein level).

It is found in the nucleus. Its function is as follows. Required for activity of the M3 pharyngeal motor neuron. The polypeptide is Homeobox protein ceh-2 (Caenorhabditis elegans).